Consider the following 96-residue polypeptide: RNA-binding protein Hfq (96 aa).

Positions 9–68 (DPYLNALRRERIPVSIYLVNGIKLQGQIESFDQFVILLKNTVNQMVYKHAISTVVPARSV) constitute a Sm domain. The disordered stretch occupies residues 65-96 (ARSVSHHNNPQQQQQHSQQTESAAPAAEPQAE). Low complexity predominate over residues 70–96 (HHNNPQQQQQHSQQTESAAPAAEPQAE).

The protein belongs to the Hfq family. As to quaternary structure, homohexamer.

In terms of biological role, RNA chaperone that binds small regulatory RNA (sRNAs) and mRNAs to facilitate mRNA translational regulation in response to envelope stress, environmental stress and changes in metabolite concentrations. Also binds with high specificity to tRNAs. The polypeptide is RNA-binding protein Hfq (Mannheimia succiniciproducens (strain KCTC 0769BP / MBEL55E)).